The following is a 375-amino-acid chain: Trichodiene synthase (375 aa).

The protein belongs to the trichodiene synthase family.

The enzyme catalyses (2E,6E)-farnesyl diphosphate = trichodiene + diphosphate. The protein operates within sesquiterpene biosynthesis; trichothecene biosynthesis. Its function is as follows. TS is a member of the terpene cyclase group of enzymes. It catalyzes the isomerization and cyclization of farnesyl pyro-phosphate to form trichodiene, the first cyclic intermediate in the biosynthetic pathway for trichothecenes. It serves to branch trichothecene biosynthesis from the isoprenoid pathway. This is Trichodiene synthase (TRI5) from Fusarium cerealis (Fusarium crookwellense).